A 222-amino-acid polypeptide reads, in one-letter code: Sororin-like protein (222 aa).

Residues 1–189 form a disordered region; sequence MEAPRSVGGR…VKQEKEDPVS (189 aa). The segment covering 24–33 has biased composition (low complexity); that stretch reads SRSSQQSSSS. Positions 47–60 are enriched in basic and acidic residues; it reads RLVEQTTLKEKPKD. Residues 88–105 show a composition bias toward low complexity; sequence ADLASPASAPSRPQTSRS. Positions 155-162 match the Nuclear localization signal motif; it reads GKKTRQAS. A compositionally biased stretch (basic residues) spans 167–179; it reads KTLKVAPKKRQRT. The segment at 192–214 is C-terminal Sororin domain; it reads CQDYIEKQKAYFAEIDAFELPVE.

The protein belongs to the sororin family.

Its subcellular location is the nucleus. In terms of biological role, regulator of sister chromatid cohesion in mitosis stabilizing cohesin complex association with chromatin. Antagonizes the action of WAPL proteins (WAPL1 and WAPL2) which stimulates cohesin dissociation from chromatin, particularly during somatic division in root cells and meiocytes during anaphase I. Required for centromeric sister chromatid cohesion during male meiosis (microsporogenesis). Cohesion ensures that chromosome partitioning is accurate in dividing cells and may play an important role in DNA repair. The polypeptide is Sororin-like protein (Arabidopsis thaliana (Mouse-ear cress)).